The following is a 348-amino-acid chain: Protein RecA (348 aa).

An ATP-binding site is contributed by 64–71; that stretch reads GPESSGKT. Residues 325–335 show a composition bias toward basic and acidic residues; sequence YEIDGSNKEPL. The interval 325–348 is disordered; that stretch reads YEIDGSNKEPLDEGEETLSLLDDE. Over residues 336 to 348 the composition is skewed to acidic residues; sequence DEGEETLSLLDDE.

Belongs to the RecA family.

The protein localises to the cytoplasm. Functionally, can catalyze the hydrolysis of ATP in the presence of single-stranded DNA, the ATP-dependent uptake of single-stranded DNA by duplex DNA, and the ATP-dependent hybridization of homologous single-stranded DNAs. It interacts with LexA causing its activation and leading to its autocatalytic cleavage. The sequence is that of Protein RecA from Listeria monocytogenes serotype 4b (strain CLIP80459).